The primary structure comprises 982 residues: Glycine dehydrogenase (decarboxylating) (982 aa).

Residue K721 is modified to N6-(pyridoxal phosphate)lysine.

This sequence belongs to the GcvP family. As to quaternary structure, the glycine cleavage system is composed of four proteins: P, T, L and H. Pyridoxal 5'-phosphate serves as cofactor.

The catalysed reaction is N(6)-[(R)-lipoyl]-L-lysyl-[glycine-cleavage complex H protein] + glycine + H(+) = N(6)-[(R)-S(8)-aminomethyldihydrolipoyl]-L-lysyl-[glycine-cleavage complex H protein] + CO2. Its function is as follows. The glycine cleavage system catalyzes the degradation of glycine. The P protein binds the alpha-amino group of glycine through its pyridoxal phosphate cofactor; CO(2) is released and the remaining methylamine moiety is then transferred to the lipoamide cofactor of the H protein. The sequence is that of Glycine dehydrogenase (decarboxylating) from Prochlorococcus marinus (strain MIT 9303).